A 298-amino-acid polypeptide reads, in one-letter code: uncharacterized protein (298 aa).

The HTH lysR-type domain maps to threonine 5 to threonine 62. Positions phenylalanine 22–arginine 42 form a DNA-binding region, H-T-H motif.

Belongs to the LysR transcriptional regulatory family.

This is an uncharacterized protein from Sinorhizobium fredii (strain NBRC 101917 / NGR234).